We begin with the raw amino-acid sequence, 275 residues long: 4-diphosphocytidyl-2-C-methyl-D-erythritol kinase (275 aa).

Lys8 is a catalytic residue. Position 86-96 (86-96 (PEGAGLGGGSS)) interacts with ATP. Asp125 is a catalytic residue.

This sequence belongs to the GHMP kinase family. IspE subfamily.

It catalyses the reaction 4-CDP-2-C-methyl-D-erythritol + ATP = 4-CDP-2-C-methyl-D-erythritol 2-phosphate + ADP + H(+). The protein operates within isoprenoid biosynthesis; isopentenyl diphosphate biosynthesis via DXP pathway; isopentenyl diphosphate from 1-deoxy-D-xylulose 5-phosphate: step 3/6. Catalyzes the phosphorylation of the position 2 hydroxy group of 4-diphosphocytidyl-2C-methyl-D-erythritol. This Thermus thermophilus (strain ATCC BAA-163 / DSM 7039 / HB27) protein is 4-diphosphocytidyl-2-C-methyl-D-erythritol kinase.